Reading from the N-terminus, the 510-residue chain is 2,3-bisphosphoglycerate-independent phosphoglycerate mutase (510 aa).

The Mn(2+) site is built by aspartate 12 and serine 62. The active-site Phosphoserine intermediate is the serine 62. Substrate-binding positions include histidine 123, 153 to 154, arginine 185, arginine 191, 260 to 263, and lysine 335; these read RD and RPDR. The Mn(2+) site is built by aspartate 402, histidine 406, aspartate 443, histidine 444, and histidine 461.

Belongs to the BPG-independent phosphoglycerate mutase family. In terms of assembly, monomer. Mn(2+) serves as cofactor.

The enzyme catalyses (2R)-2-phosphoglycerate = (2R)-3-phosphoglycerate. It participates in carbohydrate degradation; glycolysis; pyruvate from D-glyceraldehyde 3-phosphate: step 3/5. Functionally, catalyzes the interconversion of 2-phosphoglycerate and 3-phosphoglycerate. This is 2,3-bisphosphoglycerate-independent phosphoglycerate mutase from Listeria monocytogenes serovar 1/2a (strain ATCC BAA-679 / EGD-e).